The chain runs to 416 residues: Catalase-peroxidase 2 (416 aa).

A signal peptide spans 1–20 (MLLPLIVFLLSVLIHHRIYS).

The protein belongs to the peroxidase family. Peroxidase/catalase subfamily. In terms of assembly, homodimer or homotetramer. Heme b is required as a cofactor. In terms of processing, formation of the three residue Trp-Tyr-Met cross-link is important for the catalase, but not the peroxidase activity of the enzyme.

It carries out the reaction H2O2 + AH2 = A + 2 H2O. It catalyses the reaction 2 H2O2 = O2 + 2 H2O. Its function is as follows. Bifunctional enzyme with both catalase and broad-spectrum peroxidase activity. The protein is Catalase-peroxidase 2 (katG2) of Alkaliphilus metalliredigens (strain QYMF).